Here is a 372-residue protein sequence, read N- to C-terminus: Alanine racemase (372 aa).

The Proton acceptor; specific for D-alanine role is filled by K33. The residue at position 33 (K33) is an N6-(pyridoxal phosphate)lysine. R131 lines the substrate pocket. Y261 serves as the catalytic Proton acceptor; specific for L-alanine. A substrate-binding site is contributed by M309.

The protein belongs to the alanine racemase family. Requires pyridoxal 5'-phosphate as cofactor.

It carries out the reaction L-alanine = D-alanine. It functions in the pathway amino-acid biosynthesis; D-alanine biosynthesis; D-alanine from L-alanine: step 1/1. In terms of biological role, catalyzes the interconversion of L-alanine and D-alanine. May also act on other amino acids. In Salinispora tropica (strain ATCC BAA-916 / DSM 44818 / JCM 13857 / NBRC 105044 / CNB-440), this protein is Alanine racemase (alr).